Here is a 1229-residue protein sequence, read N- to C-terminus: Alpha,alpha-trehalose-phosphate synthase [UDP-forming] 2 (1229 aa).

A disordered region spans residues Val-196–Ser-233. Basic and acidic residues predominate over residues Thr-213–Ala-225.

The protein in the N-terminal section; belongs to the glycosyltransferase 20 family. This sequence in the C-terminal section; belongs to the gob-1 trehalose phosphatase family.

It catalyses the reaction D-glucose 6-phosphate + UDP-alpha-D-glucose = alpha,alpha-trehalose 6-phosphate + UDP + H(+). Catalyzes the production of trehalose from glucose-6-phosphate and UDP-alpha-D-glucose in a 2 step process. In Caenorhabditis elegans, this protein is Alpha,alpha-trehalose-phosphate synthase [UDP-forming] 2 (tps-2).